The chain runs to 134 residues: D-ribose pyranase (134 aa).

Residue H20 is the Proton donor of the active site. Substrate contacts are provided by residues D28, H99, and 123-125 (FSN).

Belongs to the RbsD / FucU family. RbsD subfamily. As to quaternary structure, homodecamer.

The protein localises to the cytoplasm. It carries out the reaction beta-D-ribopyranose = beta-D-ribofuranose. It participates in carbohydrate metabolism; D-ribose degradation; D-ribose 5-phosphate from beta-D-ribopyranose: step 1/2. Its function is as follows. Catalyzes the interconversion of beta-pyran and beta-furan forms of D-ribose. This is D-ribose pyranase from Staphylococcus carnosus (strain TM300).